We begin with the raw amino-acid sequence, 212 residues long: Uridine kinase (212 aa).

ATP is bound at residue 13 to 20 (GGSGSGKT).

It belongs to the uridine kinase family.

The protein localises to the cytoplasm. It carries out the reaction uridine + ATP = UMP + ADP + H(+). It catalyses the reaction cytidine + ATP = CMP + ADP + H(+). It functions in the pathway pyrimidine metabolism; CTP biosynthesis via salvage pathway; CTP from cytidine: step 1/3. The protein operates within pyrimidine metabolism; UMP biosynthesis via salvage pathway; UMP from uridine: step 1/1. The sequence is that of Uridine kinase from Bacillus cereus (strain B4264).